An 894-amino-acid polypeptide reads, in one-letter code: DNA mismatch repair protein MutS (894 aa).

Position 629–636 (glycine 629–serine 636) interacts with ATP. The interval threonine 819–glutamate 840 is disordered.

It belongs to the DNA mismatch repair MutS family.

In terms of biological role, this protein is involved in the repair of mismatches in DNA. It is possible that it carries out the mismatch recognition step. This protein has a weak ATPase activity. The sequence is that of DNA mismatch repair protein MutS from Cupriavidus pinatubonensis (strain JMP 134 / LMG 1197) (Cupriavidus necator (strain JMP 134)).